The primary structure comprises 458 residues: RuvB-like protein 1 (458 aa).

An ATP-binding site is contributed by 73-80; sequence GPPGTGKT.

It belongs to the RuvB family. Interacts with FRI, and with FLX and FES1, two component of the transcription activator complex FRI-C. Interacts with the disease resistance genes RPM1 and RPP5.

The protein localises to the nucleus. It catalyses the reaction ATP + H2O = ADP + phosphate + H(+). Its function is as follows. Proposed core component of the chromatin remodeling INO80 complex which is involved in transcriptional regulation, DNA replication and probably DNA repair. Component of the NuA4 histone acetyltransferase complex which is involved in transcriptional activation of select genes principally by acetylation of nucleosomal histones H4 and H2A. Has single-stranded DNA-stimulated ATPase and ATP-dependent DNA helicase (3' to 5') activity suggesting a role in nuclear processes such as recombination and transcription. The sequence is that of RuvB-like protein 1 (RIN1) from Arabidopsis thaliana (Mouse-ear cress).